A 439-amino-acid chain; its full sequence is Probable anion transporter 7 (439 aa).

A signal peptide spans Met-1 to Ile-28. The next 11 helical transmembrane spans lie at Met-53–Ala-73, Val-81–Lys-101, Val-104–Ile-124, Leu-143–Val-163, Gly-167–Leu-187, Ile-232–Leu-252, Leu-280–Ile-300, Lys-312–Phe-332, Thr-338–Val-358, Phe-367–Val-387, and Thr-412–Ser-432.

The protein belongs to the major facilitator superfamily. Sodium/anion cotransporter (TC 2.A.1.14) family.

The protein resides in the cell membrane. Its function is as follows. Probable anion transporter. The chain is Probable anion transporter 7 (PHT4;7) from Oryza sativa subsp. japonica (Rice).